Consider the following 95-residue polypeptide: Cell division topological specificity factor (95 aa).

It belongs to the MinE family.

Functionally, prevents the cell division inhibition by proteins MinC and MinD at internal division sites while permitting inhibition at polar sites. This ensures cell division at the proper site by restricting the formation of a division septum at the midpoint of the long axis of the cell. In Trichodesmium erythraeum (strain IMS101), this protein is Cell division topological specificity factor.